The sequence spans 304 residues: Voltage-dependent anion channel-forming protein YneE (304 aa).

4 helical membrane-spanning segments follow: residues leucine 28–leucine 48, isoleucine 50–phenylalanine 70, valine 194–leucine 214, and leucine 220–isoleucine 240.

It belongs to the anion channel-forming bestrophin (TC 1.A.46) family.

It is found in the cell membrane. The polypeptide is Voltage-dependent anion channel-forming protein YneE (yneE) (Escherichia coli O157:H7).